The sequence spans 78 residues: Protein DsvD (78 aa).

It to A.fulgidus DsrD.

May play an essential role in dissimilatory sulfite reduction. The protein is Protein DsvD (dsvD) of Nitratidesulfovibrio vulgaris (strain ATCC 29579 / DSM 644 / CCUG 34227 / NCIMB 8303 / VKM B-1760 / Hildenborough) (Desulfovibrio vulgaris).